A 62-amino-acid chain; its full sequence is Metallothionein-4 (62 aa).

Residues cysteine 6, cysteine 8, cysteine 14, cysteine 16, cysteine 20, cysteine 22, cysteine 25, cysteine 27, cysteine 34, cysteine 35, cysteine 37, cysteine 38, cysteine 42, cysteine 45, cysteine 49, cysteine 51, cysteine 58, cysteine 60, and cysteine 61 each coordinate a divalent metal cation.

Belongs to the metallothionein superfamily. Type 1 family.

Seems to bind zinc and copper. Could play a special role in regulating zinc metabolism during the differentiation of stratified epithelia. The polypeptide is Metallothionein-4 (MT4) (Homo sapiens (Human)).